The following is a 147-amino-acid chain: 3-dehydroquinate dehydratase (147 aa).

Catalysis depends on Y25, which acts as the Proton acceptor. Substrate is bound by residues N76, H82, and D89. The active-site Proton donor is the H102. Substrate-binding positions include 103–104 (LS) and R113.

The protein belongs to the type-II 3-dehydroquinase family. As to quaternary structure, homododecamer.

It carries out the reaction 3-dehydroquinate = 3-dehydroshikimate + H2O. The protein operates within metabolic intermediate biosynthesis; chorismate biosynthesis; chorismate from D-erythrose 4-phosphate and phosphoenolpyruvate: step 3/7. Its function is as follows. Catalyzes a trans-dehydration via an enolate intermediate. This chain is 3-dehydroquinate dehydratase, found in Nostoc sp. (strain PCC 7120 / SAG 25.82 / UTEX 2576).